A 318-amino-acid chain; its full sequence is Transaldolase (318 aa).

Residue Lys132 is the Schiff-base intermediate with substrate of the active site.

Belongs to the transaldolase family. Type 1 subfamily. As to quaternary structure, homodimer.

It is found in the cytoplasm. It carries out the reaction D-sedoheptulose 7-phosphate + D-glyceraldehyde 3-phosphate = D-erythrose 4-phosphate + beta-D-fructose 6-phosphate. It functions in the pathway carbohydrate degradation; pentose phosphate pathway; D-glyceraldehyde 3-phosphate and beta-D-fructose 6-phosphate from D-ribose 5-phosphate and D-xylulose 5-phosphate (non-oxidative stage): step 2/3. Transaldolase is important for the balance of metabolites in the pentose-phosphate pathway. The polypeptide is Transaldolase (Shewanella sp. (strain MR-7)).